Reading from the N-terminus, the 802-residue chain is MSTPLPTQDPPDIPEVLPILPLNNVVLFPGMFLPLVVSGDTWVKLVDEAALATKMVGVFMRTQPGEGFDPLALARTGAVALIVRMLRLPHGAVQILVQGQARIQIRQLIVTEPYPQARVAIHRDPAVLSVEVSGLARAALAAFQQIIQLSPTLPDELAIVAANTAQPGMLADLIAANLNLKPEDQQLVLDTLDVQERLRQVLSFLEREREILTIGRKAQEEMSKSQREYVLRQQLEAIKRELGETDDHAAEIAELRRRLEAANLPEEARKEAEREISRLERMPPGAAEYVVARTYLDWLLDLPWNVSTEDNLDLTQARQVLDEDHYDLERIKERIIEYLAVRKLRLEQDASGSARGPILCFVGPPGVGKTSLGTSIARALGRKFVRVALGGVRDEAEIRGHRRTYIGALPGRIIQGINRAGSNNPVFMLDEVDKLSVGFQGDPAAALLEVLDPEQNVAFVDRYLDVPFDLSRALFICTANRSDTIPPALLDRMELLELAGYTEMEKLEICRRYLIQRQRNEQGLAERAPTITEAALRRLIREYTHEAGVRDLERRIGAIYRKMATRAAEGQPLPDQVDAPDLDDLLGPPRFRSETLLGEDEVGVVTGLAWTPTGGDVLFVEASVVPGNGQLTLTGQLGDVMKESARAALTYARSRARALNIPTDFAQICDIHIHVPAGAVPKDGPSAGITMASALISALTDRRAYKHVAMTGEITLRGKVLPIGGVKEKVLAAQRAGVRTVLLPKANAPDLRELPEETRQQIDIVLVEHMDEVLPRVLHPKSESVTLAEPAPPDGAGTVQAT.

The region spanning 17–209 (LPILPLNNVV…QVLSFLERER (193 aa)) is the Lon N-terminal domain. 363 to 370 (GPPGVGKT) contributes to the ATP binding site. The Lon proteolytic domain maps to 599 to 780 (EDEVGVVTGL…DEVLPRVLHP (182 aa)). Active-site residues include S686 and K729.

It belongs to the peptidase S16 family. Homohexamer. Organized in a ring with a central cavity.

Its subcellular location is the cytoplasm. The enzyme catalyses Hydrolysis of proteins in presence of ATP.. Functionally, ATP-dependent serine protease that mediates the selective degradation of mutant and abnormal proteins as well as certain short-lived regulatory proteins. Required for cellular homeostasis and for survival from DNA damage and developmental changes induced by stress. Degrades polypeptides processively to yield small peptide fragments that are 5 to 10 amino acids long. Binds to DNA in a double-stranded, site-specific manner. This is Lon protease from Roseiflexus castenholzii (strain DSM 13941 / HLO8).